We begin with the raw amino-acid sequence, 509 residues long: Probable cytochrome P450 519B1 (509 aa).

The helical transmembrane segment at 1–21 (MNLINLILYFILFWIVFDFIR) threads the bilayer. Cys-456 lines the heme pocket.

This sequence belongs to the cytochrome P450 family. It depends on heme as a cofactor.

It is found in the membrane. The sequence is that of Probable cytochrome P450 519B1 (cyp519B1) from Dictyostelium discoideum (Social amoeba).